Reading from the N-terminus, the 283-residue chain is Formamidopyrimidine-DNA glycosylase (283 aa).

Catalysis depends on Pro-2, which acts as the Schiff-base intermediate with DNA. Glu-3 acts as the Proton donor in catalysis. Lys-60 (proton donor; for beta-elimination activity) is an active-site residue. Residues His-95, Arg-114, and Arg-159 each coordinate DNA. An FPG-type zinc finger spans residues 244–278 (WVYGRHNQPCRVCGTPIERIKLGGRSSHFCPQCQP). Residue Arg-268 is the Proton donor; for delta-elimination activity of the active site.

It belongs to the FPG family. In terms of assembly, monomer. Zn(2+) serves as cofactor.

It catalyses the reaction Hydrolysis of DNA containing ring-opened 7-methylguanine residues, releasing 2,6-diamino-4-hydroxy-5-(N-methyl)formamidopyrimidine.. It carries out the reaction 2'-deoxyribonucleotide-(2'-deoxyribose 5'-phosphate)-2'-deoxyribonucleotide-DNA = a 3'-end 2'-deoxyribonucleotide-(2,3-dehydro-2,3-deoxyribose 5'-phosphate)-DNA + a 5'-end 5'-phospho-2'-deoxyribonucleoside-DNA + H(+). Functionally, involved in base excision repair of DNA damaged by oxidation or by mutagenic agents. Acts as a DNA glycosylase that recognizes and removes damaged bases. Has a preference for oxidized purines, such as 7,8-dihydro-8-oxoguanine (8-oxoG). Has AP (apurinic/apyrimidinic) lyase activity and introduces nicks in the DNA strand. Cleaves the DNA backbone by beta-delta elimination to generate a single-strand break at the site of the removed base with both 3'- and 5'-phosphates. In Crocosphaera subtropica (strain ATCC 51142 / BH68) (Cyanothece sp. (strain ATCC 51142)), this protein is Formamidopyrimidine-DNA glycosylase.